Consider the following 139-residue polypeptide: Nucleoside diphosphate kinase (139 aa).

Lys-10, Phe-58, Arg-86, Thr-92, Arg-103, and Asn-113 together coordinate ATP. His-116 (pros-phosphohistidine intermediate) is an active-site residue.

Belongs to the NDK family. Homotetramer. Mg(2+) is required as a cofactor.

It localises to the cytoplasm. The enzyme catalyses a 2'-deoxyribonucleoside 5'-diphosphate + ATP = a 2'-deoxyribonucleoside 5'-triphosphate + ADP. The catalysed reaction is a ribonucleoside 5'-diphosphate + ATP = a ribonucleoside 5'-triphosphate + ADP. In terms of biological role, major role in the synthesis of nucleoside triphosphates other than ATP. The ATP gamma phosphate is transferred to the NDP beta phosphate via a ping-pong mechanism, using a phosphorylated active-site intermediate. The protein is Nucleoside diphosphate kinase of Caulobacter sp. (strain K31).